Here is a 150-residue protein sequence, read N- to C-terminus: Small ribosomal subunit protein uS11z (150 aa).

Ser-19 carries the phosphoserine modification.

It belongs to the universal ribosomal protein uS11 family. As to quaternary structure, interacts with AAK6.

The protein resides in the cytoplasm. The sequence is that of Small ribosomal subunit protein uS11z (RPS14A) from Arabidopsis thaliana (Mouse-ear cress).